A 359-amino-acid chain; its full sequence is WW domain-binding protein wbp-11 (359 aa).

3 disordered regions span residues 1 to 38 (MPSISKTKSGERYRAPTDQARKMDRKKENKRNKKDRQQ), 235 to 264 (PSSYNSMPTRMPHHHHHHHPHASSHYNPMG), and 317 to 341 (PGDNKTIVPRQAAPVQRRPEVQKQA). Over residues 8 to 27 (KSGERYRAPTDQARKMDRKK) the composition is skewed to basic and acidic residues. The segment covering 245 to 256 (MPHHHHHHHPHA) has biased composition (basic residues).

Functionally, activates pre-mRNA splicing. May inhibit PP1 phosphatase activity. The polypeptide is WW domain-binding protein wbp-11 (Caenorhabditis elegans).